The chain runs to 41 residues: Large ribosomal subunit protein bL36 (41 aa).

The protein belongs to the bacterial ribosomal protein bL36 family.

This is Large ribosomal subunit protein bL36 from Paracoccus denitrificans (strain Pd 1222).